A 136-amino-acid polypeptide reads, in one-letter code: Large ribosomal subunit protein bL19 (136 aa).

A disordered region spans residues 1 to 23 (MEETVNNQETPETSEEETADEET). The span at 12–23 (ETSEEETADEET) shows a compositional bias: acidic residues.

This sequence belongs to the bacterial ribosomal protein bL19 family.

This protein is located at the 30S-50S ribosomal subunit interface and may play a role in the structure and function of the aminoacyl-tRNA binding site. This Dehalococcoides mccartyi (strain ATCC BAA-2266 / KCTC 15142 / 195) (Dehalococcoides ethenogenes (strain 195)) protein is Large ribosomal subunit protein bL19.